A 212-amino-acid chain; its full sequence is 2-C-methyl-D-erythritol 4-phosphate cytidylyltransferase (212 aa).

Belongs to the IspD/TarI cytidylyltransferase family. IspD subfamily.

The enzyme catalyses 2-C-methyl-D-erythritol 4-phosphate + CTP + H(+) = 4-CDP-2-C-methyl-D-erythritol + diphosphate. Its pathway is isoprenoid biosynthesis; isopentenyl diphosphate biosynthesis via DXP pathway; isopentenyl diphosphate from 1-deoxy-D-xylulose 5-phosphate: step 2/6. In terms of biological role, catalyzes the formation of 4-diphosphocytidyl-2-C-methyl-D-erythritol from CTP and 2-C-methyl-D-erythritol 4-phosphate (MEP). The chain is 2-C-methyl-D-erythritol 4-phosphate cytidylyltransferase from Chlamydia caviae (strain ATCC VR-813 / DSM 19441 / 03DC25 / GPIC) (Chlamydophila caviae).